A 201-amino-acid polypeptide reads, in one-letter code: Small ribosomal subunit protein uS4 (201 aa).

In terms of domain architecture, S4 RNA-binding spans 93-156 (RRLDNMVYRL…KNLDIIKNAV (64 aa)).

It belongs to the universal ribosomal protein uS4 family. In terms of assembly, part of the 30S ribosomal subunit. Contacts protein S5. The interaction surface between S4 and S5 is involved in control of translational fidelity.

In terms of biological role, one of the primary rRNA binding proteins, it binds directly to 16S rRNA where it nucleates assembly of the body of the 30S subunit. Its function is as follows. With S5 and S12 plays an important role in translational accuracy. The polypeptide is Small ribosomal subunit protein uS4 (Limosilactobacillus reuteri subsp. reuteri (strain JCM 1112) (Lactobacillus reuteri)).